A 175-amino-acid chain; its full sequence is Centrosomal protein 20 (175 aa).

The necessary and sufficient for homooligomerization and localization to centrosomes and pericentriolar satellites stretch occupies residues 1-104 (MATIAELKAV…IVEDANGKSV (104 aa)). One can recognise a LisH domain in the interval 49–81 (ENLLINELIREYLEFNKYKYSASVLTAEAGQPE). Positions 137 to 166 (RQNLAKPSTERNQKDRIPEPGRMAGTSIEE) are disordered. Residues 144-155 (STERNQKDRIPE) are compositionally biased toward basic and acidic residues.

This sequence belongs to the CEP43 family. Homooligomer; probably required for localization to centrosomes.

It is found in the cell projection. The protein resides in the cilium. Its subcellular location is the cytoplasm. It localises to the cytoskeleton. The protein localises to the cilium basal body. It is found in the microtubule organizing center. The protein resides in the centrosome. Its subcellular location is the cytoplasmic granule. It localises to the centriolar satellite. Involved in the biogenesis of cilia. Required for the recruitment of PLK1 to centrosomes and S phase progression. The chain is Centrosomal protein 20 (CEP20) from Gallus gallus (Chicken).